We begin with the raw amino-acid sequence, 564 residues long: Septation ring formation regulator EzrA (564 aa).

Residues 1-2 (MV) are Extracellular-facing. A helical transmembrane segment spans residues 3–21 (FVISVILAIIVILTIGLIL). Residues 22-564 (RKRIYDKVDH…IEENQLTLNR (543 aa)) lie on the Cytoplasmic side of the membrane. Coiled-coil stretches lie at residues 101–140 (ANNI…REEV), 168–215 (FDKK…MEQF), 251–436 (GFDK…KKSN), and 468–537 (DIAK…ELSL).

Belongs to the EzrA family.

It is found in the cell membrane. In terms of biological role, negative regulator of FtsZ ring formation; modulates the frequency and position of FtsZ ring formation. Inhibits FtsZ ring formation at polar sites. Interacts either with FtsZ or with one of its binding partners to promote depolymerization. The chain is Septation ring formation regulator EzrA from Oceanobacillus iheyensis (strain DSM 14371 / CIP 107618 / JCM 11309 / KCTC 3954 / HTE831).